The following is a 46-amino-acid chain: Daisho2 (46 aa).

The signal sequence occupies residues 1–22 (MNCLKICGFFFALIAALATAEA).

As to expression, hemolymph (at protein level).

It is found in the secreted. Its function is as follows. Peptide which plays a role in the humoral immune response to a subset of filamentous fungi, including F.oxysporum and F.verticillioides. In Drosophila melanogaster (Fruit fly), this protein is Daisho2.